Reading from the N-terminus, the 238-residue chain is 1-(5-phosphoribosyl)-5-[(5-phosphoribosylamino)methylideneamino] imidazole-4-carboxamide isomerase (238 aa).

The active-site Proton acceptor is D8. The Proton donor role is filled by D130.

The protein belongs to the HisA/HisF family.

The protein resides in the cytoplasm. It catalyses the reaction 1-(5-phospho-beta-D-ribosyl)-5-[(5-phospho-beta-D-ribosylamino)methylideneamino]imidazole-4-carboxamide = 5-[(5-phospho-1-deoxy-D-ribulos-1-ylimino)methylamino]-1-(5-phospho-beta-D-ribosyl)imidazole-4-carboxamide. It participates in amino-acid biosynthesis; L-histidine biosynthesis; L-histidine from 5-phospho-alpha-D-ribose 1-diphosphate: step 4/9. In Methanococcus maripaludis (strain C5 / ATCC BAA-1333), this protein is 1-(5-phosphoribosyl)-5-[(5-phosphoribosylamino)methylideneamino] imidazole-4-carboxamide isomerase.